Here is a 302-residue protein sequence, read N- to C-terminus: Urease accessory protein UreD 2 (302 aa).

This sequence belongs to the UreD family. As to quaternary structure, ureD, UreF and UreG form a complex that acts as a GTP-hydrolysis-dependent molecular chaperone, activating the urease apoprotein by helping to assemble the nickel containing metallocenter of UreC. The UreE protein probably delivers the nickel.

The protein resides in the cytoplasm. Its function is as follows. Required for maturation of urease via the functional incorporation of the urease nickel metallocenter. The polypeptide is Urease accessory protein UreD 2 (Brucella canis (strain ATCC 23365 / NCTC 10854 / RM-666)).